An 810-amino-acid polypeptide reads, in one-letter code: Phenylalanine--tRNA ligase beta subunit (810 aa).

Residues 39 to 151 form the tRNA-binding domain; sequence RTWAAGVVVG…AGLQAGQPVG (113 aa). The B5 domain occupies 408–494; that stretch reads EPEHSITLRL…RLYGYDNFGE (87 aa). Residues Asp472, Asp478, Glu481, and Glu482 each coordinate Mg(2+). The FDX-ACB domain maps to 716–809; the sequence is SSFPASDRDL…LVERFRVTLR (94 aa).

Belongs to the phenylalanyl-tRNA synthetase beta subunit family. Type 1 subfamily. In terms of assembly, tetramer of two alpha and two beta subunits. Requires Mg(2+) as cofactor.

Its subcellular location is the cytoplasm. It catalyses the reaction tRNA(Phe) + L-phenylalanine + ATP = L-phenylalanyl-tRNA(Phe) + AMP + diphosphate + H(+). This is Phenylalanine--tRNA ligase beta subunit (pheT) from Synechococcus elongatus (strain ATCC 33912 / PCC 7942 / FACHB-805) (Anacystis nidulans R2).